Here is a 290-residue protein sequence, read N- to C-terminus: Ribosomal RNA small subunit methyltransferase A (290 aa).

S-adenosyl-L-methionine-binding residues include Asn27, Leu29, Gly54, Glu75, Asp100, and Asn125.

This sequence belongs to the class I-like SAM-binding methyltransferase superfamily. rRNA adenine N(6)-methyltransferase family. RsmA subfamily.

The protein localises to the cytoplasm. It carries out the reaction adenosine(1518)/adenosine(1519) in 16S rRNA + 4 S-adenosyl-L-methionine = N(6)-dimethyladenosine(1518)/N(6)-dimethyladenosine(1519) in 16S rRNA + 4 S-adenosyl-L-homocysteine + 4 H(+). Functionally, specifically dimethylates two adjacent adenosines (A1518 and A1519) in the loop of a conserved hairpin near the 3'-end of 16S rRNA in the 30S particle. May play a critical role in biogenesis of 30S subunits. In Streptococcus pneumoniae (strain CGSP14), this protein is Ribosomal RNA small subunit methyltransferase A.